The following is a 580-amino-acid chain: Tyrosyl-DNA phosphodiesterase 1 (580 aa).

Positions 65-117 (ATNKEQEAHSSSSKPAVTAPVASGSSSSGSLDTNPSGSSASGPAASQDTSNLA) are disordered. The segment covering 87–110 (SGSSSSGSLDTNPSGSSASGPAAS) has biased composition (low complexity). Histidine 248 (nucleophile) is an active-site residue. Lysine 250 contributes to the substrate binding site. Positions 387 to 390 (SIGS) are interaction with DNA. Histidine 479 functions as the Proton donor/acceptor in the catalytic mechanism. Position 481 (lysine 481) interacts with substrate.

It belongs to the tyrosyl-DNA phosphodiesterase family. Expressed in the body and at higher levels in the head. Expressed in the delaminating neuroblasts and a few ganglion mother cells in stage 11-14 embryonic central nervous system. Weak expression is seen in gonads at stage 16. Expressed in the brain; expression is regulated by DIP2.

It is found in the nucleus. It localises to the cytoplasm. In terms of biological role, DNA repair enzyme that can remove a variety of covalent adducts from DNA through hydrolysis of a 3'-phosphodiester bond, giving rise to DNA with a free 3' phosphate. Catalyzes the hydrolysis of dead-end complexes between DNA and the topoisomerase I active site tyrosine residue. Hydrolyzes 3'-phosphoglycolates on protruding 3' ends on DNA double-strand breaks due to DNA damage by radiation and free radicals. Acts on blunt-ended double-strand DNA breaks and on single-stranded DNA. May have low 3'exonuclease activity and may be able to remove a single nucleoside from the 3'end of DNA and RNA molecules with 3'hydroxyl groups. Has no exonuclease activity towards DNA or RNA with a 3'phosphate. Required for normal polarization of epidermal cells, correct subcellular location of the Crb complex to the apical lateral membrane, and for normal neuronal development during embryonic development. Contributes to maintenance of epithelial cells in response to topoisomerase-1-mediated and oxidative DNA damage. Required for precise axonal bifurcation in mushroom body neurons. Required for maintenance of normal neuronal function. In Drosophila melanogaster (Fruit fly), this protein is Tyrosyl-DNA phosphodiesterase 1.